The chain runs to 627 residues: Polyadenylate-binding protein, cytoplasmic and nuclear (627 aa).

A compositionally biased stretch (polar residues) spans 1-11 (MSAADANQVQE). The disordered stretch occupies residues 1–46 (MSAADANQVQESLEKLNLDSAPVASTEETEQTASGETEEAADSAQV). RRM domains are found at residues 51-129 (ASLY…WSQR), 139-216 (GNIF…KHIS), 232-309 (TNVY…RAQK), and 335-412 (VNLF…LAQR). Over residues 511–535 (DFNNGANGGRQQRGYYPNRNQNQKG) the composition is skewed to low complexity. Residues 511–537 (DFNNGANGGRQQRGYYPNRNQNQKGRQ) are disordered. Residues 537–618 (QQKDLAAIIA…ALTAFEEYKK (82 aa)) form the PABC domain.

Belongs to the polyadenylate-binding protein type-1 family.

It is found in the cytoplasm. Its subcellular location is the nucleus. In terms of biological role, binds the poly(A) tail of mRNA. Appears to be an important mediator of the multiple roles of the poly(A) tail in mRNA biogenesis, stability and translation. In the nucleus, involved in both mRNA cleavage and polyadenylation. Is also required for efficient mRNA export to the cytoplasm. Acts in concert with a poly(A)-specific nuclease (PAN) to affect poly(A) tail shortening, which may occur concomitantly with either nucleocytoplasmic mRNA transport or translational initiation. In the cytoplasm, stimulates translation initiation and regulates mRNA decay through translation termination-coupled poly(A) shortening, probably mediated by PAN. This Debaryomyces hansenii (strain ATCC 36239 / CBS 767 / BCRC 21394 / JCM 1990 / NBRC 0083 / IGC 2968) (Yeast) protein is Polyadenylate-binding protein, cytoplasmic and nuclear (PAB1).